A 461-amino-acid polypeptide reads, in one-letter code: Fumarate hydratase class II (461 aa).

Substrate-binding positions include 97-99 (SGT), 127-130 (HPND), 137-139 (SSN), and threonine 185. Histidine 186 serves as the catalytic Proton donor/acceptor. The active site involves serine 316. Substrate is bound by residues serine 317 and 322–324 (KVN).

This sequence belongs to the class-II fumarase/aspartase family. Fumarase subfamily. In terms of assembly, homotetramer.

Its subcellular location is the cytoplasm. The catalysed reaction is (S)-malate = fumarate + H2O. Its pathway is carbohydrate metabolism; tricarboxylic acid cycle; (S)-malate from fumarate: step 1/1. Functionally, involved in the TCA cycle. Catalyzes the stereospecific interconversion of fumarate to L-malate. The polypeptide is Fumarate hydratase class II (Staphylococcus aureus (strain MSSA476)).